The sequence spans 197 residues: Putative manganese efflux pump MntP 1 (197 aa).

The next 6 helical transmembrane spans lie at 8-28, 43-63, 66-86, 123-143, 146-166, and 176-196; these read VILL…GLGA, VYAA…GYLL, VLLG…LILL, LAIA…LLAL, WLAC…GIYL, and DKAE…VMFI.

Belongs to the MntP (TC 9.B.29) family.

It localises to the cell inner membrane. In terms of biological role, probably functions as a manganese efflux pump. This Psychrobacter cryohalolentis (strain ATCC BAA-1226 / DSM 17306 / VKM B-2378 / K5) protein is Putative manganese efflux pump MntP 1.